The following is a 195-amino-acid chain: Transcriptional regulator GfcR (195 aa).

The protein belongs to the purine/pyrimidine phosphoribosyltransferase family. GfcR subfamily.

In Picrophilus torridus (strain ATCC 700027 / DSM 9790 / JCM 10055 / NBRC 100828 / KAW 2/3), this protein is Transcriptional regulator GfcR.